Reading from the N-terminus, the 188-residue chain is Elongation factor P (188 aa).

It belongs to the elongation factor P family.

The protein localises to the cytoplasm. Its pathway is protein biosynthesis; polypeptide chain elongation. Its function is as follows. Involved in peptide bond synthesis. Stimulates efficient translation and peptide-bond synthesis on native or reconstituted 70S ribosomes in vitro. Probably functions indirectly by altering the affinity of the ribosome for aminoacyl-tRNA, thus increasing their reactivity as acceptors for peptidyl transferase. The protein is Elongation factor P of Rhodospirillum centenum (strain ATCC 51521 / SW).